Here is a 100-residue protein sequence, read N- to C-terminus: Small ribosomal subunit protein uS14 (100 aa).

Belongs to the universal ribosomal protein uS14 family. Part of the 30S ribosomal subunit. Contacts proteins S3 and S10.

In terms of biological role, binds 16S rRNA, required for the assembly of 30S particles and may also be responsible for determining the conformation of the 16S rRNA at the A site. This Acaryochloris marina (strain MBIC 11017) protein is Small ribosomal subunit protein uS14.